The following is a 69-amino-acid chain: Large ribosomal subunit protein bL28 (69 aa).

Belongs to the bacterial ribosomal protein bL28 family.

This Oleidesulfovibrio alaskensis (strain ATCC BAA-1058 / DSM 17464 / G20) (Desulfovibrio alaskensis) protein is Large ribosomal subunit protein bL28.